The primary structure comprises 754 residues: Zinc finger protein with KRAB and SCAN domains 7 (754 aa).

Residue K28 forms a Glycyl lysine isopeptide (Lys-Gly) (interchain with G-Cter in SUMO2) linkage. In terms of domain architecture, SCAN box spans R54 to L136. Residues T157 to D215 form a disordered region. Composition is skewed to polar residues over residues A158–S172 and Q199–D215. In terms of domain architecture, KRAB spans V231–P306. 10 consecutive C2H2-type zinc fingers follow at residues Y383 to H405, Y411 to H433, Y439 to H461, Y467 to H489, Y495 to H517, Y523 to H545, Y551 to H573, Y579 to H601, F607 to H629, and Y635 to H657. A C2H2-type 11; degenerate zinc finger spans residues Y663 to H685. 2 C2H2-type zinc fingers span residues Y691 to H713 and Y719 to H741. Positions N735–S754 are disordered.

This sequence belongs to the krueppel C2H2-type zinc-finger protein family.

It is found in the nucleus. May be involved in transcriptional regulation. In Homo sapiens (Human), this protein is Zinc finger protein with KRAB and SCAN domains 7 (ZKSCAN7).